The sequence spans 138 residues: Basic phospholipase A2 Drk-b1 (138 aa).

The signal sequence occupies residues 1–16; that stretch reads MRTLWIVAMCLIGVEG. 7 disulfides stabilise this stretch: C42/C131, C44/C60, C59/C111, C65/C138, C66/C104, C73/C97, and C91/C102. Y43, G45, and G47 together coordinate Ca(2+). H63 is an active-site residue. D64 is a Ca(2+) binding site. D105 is an active-site residue.

Ca(2+) is required as a cofactor. Expressed by the venom gland.

The protein localises to the secreted. The catalysed reaction is a 1,2-diacyl-sn-glycero-3-phosphocholine + H2O = a 1-acyl-sn-glycero-3-phosphocholine + a fatty acid + H(+). In terms of biological role, exhibits high hydrolytic activities and shows strong preference for the anionic micelles (dPPC with deoxycholate) to the zwitterionic micelles (dPPC with Triton X-100). PLA2 catalyzes the calcium-dependent hydrolysis of the 2-acyl groups in 3-sn-phosphoglycerides. This is Basic phospholipase A2 Drk-b1 from Daboia russelii (Russel's viper).